Here is a 333-residue protein sequence, read N- to C-terminus: Protein XAP5 CIRCADIAN TIMEKEEPER (333 aa).

2 coiled-coil regions span residues 12-43 (AQDA…SDGQ) and 70-116 (TREQ…VRGD). Residues 89 to 98 (EKEKLQKLQQ) are compositionally biased toward basic and acidic residues. The interval 89-171 (EKEKLQKLQQ…REREAEEQAE (83 aa)) is disordered. Residues 123 to 136 (DEIENGSDEDEFEN) are compositionally biased toward acidic residues. A compositionally biased stretch (basic and acidic residues) spans 160–171 (PDREREAEEQAE).

The protein belongs to the FAM50 family.

Its subcellular location is the nucleus. In terms of biological role, involved in light regulation of the circadian clock and photomorphogenesis. This is Protein XAP5 CIRCADIAN TIMEKEEPER (XCT) from Oryza sativa subsp. indica (Rice).